Consider the following 366-residue polypeptide: tRNA-specific 2-thiouridylase MnmA (366 aa).

ATP contacts are provided by residues 6–13 (GLSGGVDS) and M32. The Nucleophile role is filled by C96. The cysteines at positions 96 and 196 are disulfide-linked. Position 120 (G120) interacts with ATP. Residues 146–148 (KDQ) form an interaction with tRNA region. The Cysteine persulfide intermediate role is filled by C196. Residues 302 to 303 (RY) are interaction with tRNA.

The protein belongs to the MnmA/TRMU family.

The protein resides in the cytoplasm. It catalyses the reaction S-sulfanyl-L-cysteinyl-[protein] + uridine(34) in tRNA + AH2 + ATP = 2-thiouridine(34) in tRNA + L-cysteinyl-[protein] + A + AMP + diphosphate + H(+). Functionally, catalyzes the 2-thiolation of uridine at the wobble position (U34) of tRNA, leading to the formation of s(2)U34. This Treponema denticola (strain ATCC 35405 / DSM 14222 / CIP 103919 / JCM 8153 / KCTC 15104) protein is tRNA-specific 2-thiouridylase MnmA.